We begin with the raw amino-acid sequence, 476 residues long: Aspartyl/glutamyl-tRNA(Asn/Gln) amidotransferase subunit B (476 aa).

Belongs to the GatB/GatE family. GatB subfamily. As to quaternary structure, heterotrimer of A, B and C subunits.

It catalyses the reaction L-glutamyl-tRNA(Gln) + L-glutamine + ATP + H2O = L-glutaminyl-tRNA(Gln) + L-glutamate + ADP + phosphate + H(+). It carries out the reaction L-aspartyl-tRNA(Asn) + L-glutamine + ATP + H2O = L-asparaginyl-tRNA(Asn) + L-glutamate + ADP + phosphate + 2 H(+). Allows the formation of correctly charged Asn-tRNA(Asn) or Gln-tRNA(Gln) through the transamidation of misacylated Asp-tRNA(Asn) or Glu-tRNA(Gln) in organisms which lack either or both of asparaginyl-tRNA or glutaminyl-tRNA synthetases. The reaction takes place in the presence of glutamine and ATP through an activated phospho-Asp-tRNA(Asn) or phospho-Glu-tRNA(Gln). The sequence is that of Aspartyl/glutamyl-tRNA(Asn/Gln) amidotransferase subunit B from Clostridium botulinum (strain ATCC 19397 / Type A).